The primary structure comprises 161 residues: MLKLVKMFSDGSCLGNPGSGGYGTILRYKLHEKILTSGFFLTTNNRMELMGVICGLESLKESCIVEITIDSQYVKQGITNWIATWEKKKWKTTKKKLIKNLDLWLRINAVIKNHHITWFWVKAHMGHLENERCDKIARQSAQSPSVKDFFYENNFYQNKNL.

In terms of domain architecture, RNase H type-1 spans 1–142 (MLKLVKMFSD…CDKIARQSAQ (142 aa)). Mg(2+) is bound by residues Asp-10, Glu-48, Asp-70, and Asp-134.

Belongs to the RNase H family. In terms of assembly, monomer. The cofactor is Mg(2+).

The protein localises to the cytoplasm. The catalysed reaction is Endonucleolytic cleavage to 5'-phosphomonoester.. Its function is as follows. Endonuclease that specifically degrades the RNA of RNA-DNA hybrids. In Buchnera aphidicola subsp. Schizaphis graminum (strain Sg), this protein is Ribonuclease H (rnhA).